The chain runs to 160 residues: Twist-related protein 2 (160 aa).

Residues 1 to 63 form a disordered region; it reads MEEGSSSPVS…GSPSAQSFEE (63 aa). A compositionally biased stretch (basic residues) spans 27 to 37; the sequence is KRFGRKRRYSK. The 52-residue stretch at 66–117 folds into the bHLH domain; that stretch reads SQRILANVRERQRTQSLNEAFAALRKIIPTLPSDKLSKIQTLKLAARYIDFL.

As to quaternary structure, efficient DNA binding requires dimerization with another bHLH protein. Forms a heterodimer with TCF3/E12. Also interacts with MEF2C. In the embryo, highly expressed in chondrogenic cells. In embryonic skin, expressed in the undifferentiated mesenchymal layer beneath the epidermis which later develops into the dermis. Expressed in early myeloid cells but not in lymphoid cells in the liver. Expression also detected in the secretory ependymal epithelium of the choroid plexus primordium. In the adult, expressed in secreting glandular tissues and tubules.

The protein localises to the nucleus. It is found in the cytoplasm. Functionally, binds to the E-box consensus sequence 5'-CANNTG-3' as a heterodimer and inhibits transcriptional activation by MYOD1, MYOG, MEF2A and MEF2C. Also represses expression of pro-inflammatory cytokines such as TNFA and IL1B. Involved in postnatal glycogen storage and energy metabolism. Inhibits the premature or ectopic differentiation of preosteoblast cells during osteogenesis, possibly by changing the internal signal transduction response of osteoblasts to external growth factors. The polypeptide is Twist-related protein 2 (TWIST2) (Homo sapiens (Human)).